We begin with the raw amino-acid sequence, 84 residues long: U21-theraphotoxin-Cg1a 2 (84 aa).

A signal peptide spans 1-21 (MKVSVLITLAVLGVMFLFTSA). Positions 22 to 47 (EERGSDQMDSPAWLKSMEIIFQSEER) are excised as a propeptide. Cystine bridges form between cysteine 49/cysteine 63, cysteine 56/cysteine 68, and cysteine 62/cysteine 76. Valine 82 is subject to Valine amide.

This sequence belongs to the neurotoxin 10 (Hwtx-1) family. 05 (F4a) subfamily. As to expression, expressed by the venom gland.

Its subcellular location is the secreted. Functionally, probable ion channel inhibitor. The polypeptide is U21-theraphotoxin-Cg1a 2 (Chilobrachys guangxiensis (Chinese earth tiger tarantula)).